The primary structure comprises 676 residues: Urocanate hydratase (676 aa).

NAD(+) is bound by residues G126–G127, Q204, G251–S253, E271, N317–V318, Q343–H347, Y354–Y355, and Y403. K534 is modified (N6-succinyllysine). Residue G594 coordinates NAD(+).

Belongs to the urocanase family. NAD(+) is required as a cofactor.

The enzyme catalyses 4-imidazolone-5-propanoate = trans-urocanate + H2O. Its pathway is amino-acid degradation; L-histidine degradation into L-glutamate; N-formimidoyl-L-glutamate from L-histidine: step 2/3. This chain is Urocanate hydratase (Uroc1), found in Mus musculus (Mouse).